A 482-amino-acid polypeptide reads, in one-letter code: Malvidin galactosylase UGT88C3 (482 aa).

His-16 acts as the Proton acceptor in catalysis. Residue Asp-117 is the Charge relay of the active site. UDP contacts are provided by Ser-279, Trp-345, Ala-349, His-366, Asn-370, Ser-371, and Glu-374.

This sequence belongs to the UDP-glycosyltransferase family.

Its subcellular location is the endoplasmic reticulum. It localises to the nucleus. It carries out the reaction malvidin + UDP-alpha-D-galactose = malvidin 3-O-beta-D-galactoside + UDP + H(+). It functions in the pathway pigment biosynthesis; anthocyanin biosynthesis. UDP-glycosyltransferase which uses UDP-galactose and malvidin as substrates to catalyze the biosynthesis of malvidin 3-O-galactoside, an anthocyanin conferring purple pigmentation. The chain is Malvidin galactosylase UGT88C3 from Oryza sativa subsp. indica (Rice).